Here is a 298-residue protein sequence, read N- to C-terminus: Inosose dehydratase (298 aa).

Belongs to the IolE/MocC family. Glutathione serves as cofactor. It depends on Co(2+) as a cofactor. Mn(2+) is required as a cofactor.

The catalysed reaction is scyllo-inosose = 3D-3,5/4-trihydroxycyclohexane-1,2-dione + H2O. It functions in the pathway polyol metabolism; myo-inositol degradation into acetyl-CoA; acetyl-CoA from myo-inositol: step 2/7. Its function is as follows. Catalyzes the dehydration of inosose (2-keto-myo-inositol, 2KMI or 2,4,6/3,5-pentahydroxycyclohexanone) to 3D-(3,5/4)-trihydroxycyclohexane-1,2-dione (D-2,3-diketo-4-deoxy-epi-inositol). The sequence is that of Inosose dehydratase from Bacillus thuringiensis (strain Al Hakam).